Reading from the N-terminus, the 83-residue chain is uncharacterized protein (83 aa).

The signal sequence occupies residues 1 to 20; it reads MRRALTLAVLATCAVLPALA.

To P.denitrificans and M.extorquens MoxJ.

This is an uncharacterized protein from Paracoccus denitrificans.